Consider the following 271-residue polypeptide: Calretinin (271 aa).

EF-hand domains lie at Leu-16–Ala-51, Asn-63–Phe-98, Gly-107–Lys-142, Lys-151–Phe-186, Leu-195–Lys-230, and Met-235–Pro-270. Ca(2+) contacts are provided by Asp-29, Asp-31, Asn-33, Tyr-35, Glu-40, Asp-76, Asn-78, Asp-80, Lys-82, Glu-87, Asp-120, Asp-122, Ser-124, Tyr-126, Glu-131, Asp-164, Asn-166, Asp-168, Lys-170, Glu-175, Asp-208, Asp-210, Ser-212, Tyr-214, and Glu-219. At Tyr-214 the chain carries Phosphotyrosine.

This sequence belongs to the calbindin family.

It localises to the synapse. It is found in the cell projection. The protein localises to the dendrite. Calcium-binding protein involved in calcium homeostasis and signal transduction. It plays a critical role in buffering intracellular calcium levels and modulating calcium-dependent signaling pathways. Predominantly expressed in specific neuronal populations, influences synaptic plasticity and neuronal excitability, contributing to learning and memory. During embryonic development, it facilitates neuronal differentiation and maturation. This Rattus norvegicus (Rat) protein is Calretinin (Calb2).